The following is a 467-amino-acid chain: Microtubule-associated tyrosine carboxypeptidase 1 (467 aa).

Over residues Met-1 to Tyr-10 the composition is skewed to polar residues. 2 disordered regions span residues Met-1 to Pro-40 and Met-77 to Pro-111. His-276 contributes to the Zn(2+) binding site. Residue Glu-277 is the Nucleophile of the active site. Zn(2+) is bound by residues His-281 and Glu-312.

It belongs to the peptidase MATCAP family. It depends on Zn(2+) as a cofactor.

The protein resides in the cytoplasm. The protein localises to the cytoskeleton. The catalysed reaction is C-terminal L-alpha-aminoacyl-L-glutamyl-L-glutamyl-L-tyrosyl-[tubulin] + H2O = C-terminal L-alpha-aminoacyl-L-glutamyl-L-glutamyl-[tubulin] + L-tyrosine. It catalyses the reaction C-terminal L-alpha-aminoacyl-L-glutamyl-L-glutamyl-L-phenylalanyl-[tubulin] + H2O = C-terminal L-alpha-aminoacyl-L-glutamyl-L-glutamyl-[tubulin] + L-phenylalanine. Tyrosine carboxypeptidase that removes the C-terminal tyrosine residue of alpha-tubulin, thereby regulating microtubule dynamics and function. Also able to remove the C-terminal phenylalanine residue of alpha-tubulin TUBA8. Recognizes adjacent tubulin dimers along the same protofilament. This is Microtubule-associated tyrosine carboxypeptidase 1 from Mus musculus (Mouse).